The chain runs to 632 residues: Nucleoside triphosphatase I (632 aa).

Positions 42-204 (FLGLDKMHSL…VMLVNLLRPK (163 aa)) constitute a Helicase ATP-binding domain. An ATP-binding site is contributed by 55 to 62 (HETGVGKT). The short motif at 141–144 (DECH) is the DEXH box element. Residues 367–532 (KFTDVCLRIL…EFTQLFKVFK (166 aa)) form the Helicase C-terminal domain. The tract at residues 457–524 (DIFILDMTWN…DIIRTKSKEF (68 aa)) is binding to the cap-specific mRNA (nucleoside-2'-O-)-methyltransferase.

Belongs to the helicase family. NPH I subfamily. As to quaternary structure, monomer. Interacts (via C-terminus) with RAP94 (via N-terminus). Interacts with the cap-specific mRNA (nucleoside-2'-O-)-methyltransferase.

It localises to the virion. It catalyses the reaction a ribonucleoside 5'-triphosphate + H2O = a ribonucleoside 5'-diphosphate + phosphate + H(+). Functionally, DNA-dependent ATPase required for providing the needed energy to achieve the termination of early transcripts. Acts in concert with the RAP94 subunit of the virion RNA polymerase and the capping enzyme/VTF to catalyze release of UUUUUNU-containing nascent RNA from the elongation complex. NPH-I must bind ssDNA in order to exhibit ATPase activity. This Myxoma virus (strain Lausanne) (MYXV) protein is Nucleoside triphosphatase I (NPH1).